The primary structure comprises 388 residues: MNIHEYQGKEILRKYNVPVPRGIPAFSVDEALKAAETLGGPVWVVKAQIHAGGRGKGGGVKVAKSIDDVKTYASNILGMQLVTHQTGPEGKKVNRLLIEEGADIKKELYVSLVVDRVSQKVALMASSEGGMDIEEVAAHSPEKIHTLIIEPSVGLTDAEADDIARKIGVPDTSVAQARQALQGLYKAFYETDASLAEINPLILTGDGKVIALDAKFNFDSNALFRHPEIVAYRDLDEEDANEIEASKFDLAYISLDGNIGCLVNGAGLAMATMDTIKLFGGEPANFLDVGGGATTEKVTEAFKLMLSNKNVQAILVNIFGGIMRCDVIAEGVISASKAVHLTVPLVVRMKGTNEDLGKKMLADSGLPIISADTMEEAAQKVVAAAAGK.

Residues 9–244 form the ATP-grasp domain; it reads KEILRKYNVP…LDEEDANEIE (236 aa). ATP contacts are provided by residues K46, 53-55, E99, A102, and E107; that span reads GRG. Residues N199 and D213 each contribute to the Mg(2+) site. Residues N264 and 321–323 contribute to the substrate site; that span reads GIM.

Belongs to the succinate/malate CoA ligase beta subunit family. In terms of assembly, heterotetramer of two alpha and two beta subunits. Mg(2+) serves as cofactor.

The catalysed reaction is succinate + ATP + CoA = succinyl-CoA + ADP + phosphate. It carries out the reaction GTP + succinate + CoA = succinyl-CoA + GDP + phosphate. The protein operates within carbohydrate metabolism; tricarboxylic acid cycle; succinate from succinyl-CoA (ligase route): step 1/1. Functionally, succinyl-CoA synthetase functions in the citric acid cycle (TCA), coupling the hydrolysis of succinyl-CoA to the synthesis of either ATP or GTP and thus represents the only step of substrate-level phosphorylation in the TCA. The beta subunit provides nucleotide specificity of the enzyme and binds the substrate succinate, while the binding sites for coenzyme A and phosphate are found in the alpha subunit. The protein is Succinate--CoA ligase [ADP-forming] subunit beta of Cupriavidus necator (strain ATCC 17699 / DSM 428 / KCTC 22496 / NCIMB 10442 / H16 / Stanier 337) (Ralstonia eutropha).